The primary structure comprises 431 residues: Serine hydroxymethyltransferase (431 aa).

(6S)-5,6,7,8-tetrahydrofolate is bound by residues leucine 128 and 132–134 (GHL). Lysine 237 is subject to N6-(pyridoxal phosphate)lysine. Glutamate 253 is a (6S)-5,6,7,8-tetrahydrofolate binding site.

The protein belongs to the SHMT family. As to quaternary structure, homodimer. Pyridoxal 5'-phosphate is required as a cofactor.

It is found in the cytoplasm. The catalysed reaction is (6R)-5,10-methylene-5,6,7,8-tetrahydrofolate + glycine + H2O = (6S)-5,6,7,8-tetrahydrofolate + L-serine. It functions in the pathway one-carbon metabolism; tetrahydrofolate interconversion. Its pathway is amino-acid biosynthesis; glycine biosynthesis; glycine from L-serine: step 1/1. Functionally, catalyzes the reversible interconversion of serine and glycine with tetrahydrofolate (THF) serving as the one-carbon carrier. This reaction serves as the major source of one-carbon groups required for the biosynthesis of purines, thymidylate, methionine, and other important biomolecules. Also exhibits THF-independent aldolase activity toward beta-hydroxyamino acids, producing glycine and aldehydes, via a retro-aldol mechanism. This chain is Serine hydroxymethyltransferase, found in Cereibacter sphaeroides (strain ATCC 17023 / DSM 158 / JCM 6121 / CCUG 31486 / LMG 2827 / NBRC 12203 / NCIMB 8253 / ATH 2.4.1.) (Rhodobacter sphaeroides).